Consider the following 443-residue polypeptide: Citrate transporter CitP (443 aa).

The next 13 helical transmembrane spans lie at 27 to 47 (ISGI…IAIS), 59 to 79 (IFAL…LPIF), 83 to 103 (LGGG…TNVM), 114 to 134 (FING…SSLF), 151 to 171 (VAFI…VIIG), 177 to 197 (AILY…IVPL), 209 to 229 (SAGI…LAII), 268 to 288 (YVQL…GTML), 294 to 314 (GINA…FGLL), 322 to 342 (VIMF…AGVG), 350 to 370 (VLLA…IVAI), 388 to 410 (AAIT…VLAA), and 422 to 442 (MGNR…VTFM).

It belongs to the 2-hydroxycarboxylate transporter (2-HCT) (TC 2.A.24) family.

It localises to the cell membrane. The enzyme catalyses (R)-lactate(in) + citrate(out) = (R)-lactate(out) + citrate(in). The catalysed reaction is (S)-lactate(in) + citrate(out) = (S)-lactate(out) + citrate(in). It catalyses the reaction citrate(in) + H(+)(in) = citrate(out) + H(+)(out). Its activity is regulated as follows. Uptake of citrate is not affected by the absence or presence of Na(+) up to 25 mM and is increasingly inhibited by increasing Mg(2+) concentrations. Secondary transporter involved in citrate metabolism. During cometabolism of citrate and glucose, catalyzes the uptake of divalent citrate into the cell coupled to the exit of monovalent lactate, a product of citrate fermentation during citrate-glucose cometabolism (precursor/product exchange). The citrate/lactate exchange is electrogenic and results in the generation of a membrane potential. In the absence of glucose, i.e. when no lactate is produced, CitP catalyzes the proton-dependent transport of citrate and malate. Transports the divalent form of citrate and malate with the concomitant uptake of one proton, therefore translocating a single unit of negative charge across the membrane. In vitro, transports a range of substrates that contain the 2-hydroxycarboxylate motif, HO-CR(2)-COO(-), with a preference for malate, citrate and monovalent 2-hydroxyisobutyrate. Modification of the OH or the COO(-) groups of the 2-hydroxycarboxylate motif drastically reduces the affinity of the transporter for the substrates, indicating their relevance in substrate recognition. Significant activity is also observed with some 2-oxocarboxylates and a 3-hydroxycarboxylate. The protein is Citrate transporter CitP of Leuconostoc mesenteroides subsp. mesenteroides.